The sequence spans 296 residues: Protease HtpX homolog (296 aa).

The next 2 membrane-spanning stretches (helical) occupy residues 7 to 27 and 29 to 49; these read TVLL…LVAG and QGMI…YFFS. Residue His-131 coordinates Zn(2+). Glu-132 is a catalytic residue. His-135 contacts Zn(2+). 2 consecutive transmembrane segments (helical) span residues 141–161 and 178–198; these read ILIS…ANMA and IASI…ATLI. Zn(2+) is bound at residue Glu-207.

The protein belongs to the peptidase M48B family. Zn(2+) serves as cofactor.

Its subcellular location is the cell inner membrane. The chain is Protease HtpX homolog from Sulfurihydrogenibium sp. (strain YO3AOP1).